The following is a 361-amino-acid chain: Chorismate synthase (361 aa).

NADP(+) is bound by residues Arg48 and Arg54. FMN contacts are provided by residues 125–127 (RSS), 238–239 (NA), Gly278, 293–297 (KPTSS), and Arg319.

The protein belongs to the chorismate synthase family. In terms of assembly, homotetramer. Requires FMNH2 as cofactor.

The catalysed reaction is 5-O-(1-carboxyvinyl)-3-phosphoshikimate = chorismate + phosphate. It functions in the pathway metabolic intermediate biosynthesis; chorismate biosynthesis; chorismate from D-erythrose 4-phosphate and phosphoenolpyruvate: step 7/7. In terms of biological role, catalyzes the anti-1,4-elimination of the C-3 phosphate and the C-6 proR hydrogen from 5-enolpyruvylshikimate-3-phosphate (EPSP) to yield chorismate, which is the branch point compound that serves as the starting substrate for the three terminal pathways of aromatic amino acid biosynthesis. This reaction introduces a second double bond into the aromatic ring system. The sequence is that of Chorismate synthase from Escherichia coli O139:H28 (strain E24377A / ETEC).